Here is a 637-residue protein sequence, read N- to C-terminus: Galactofuranosyltransferase GlfT2 (637 aa).

UDP-alpha-D-galactofuranose-binding residues include Arg171, Gln200, Asn229, and Asp256. Mn(2+)-binding residues include Asp256 and Asp258. The Proton acceptor role is filled by Asp372. A Mn(2+)-binding site is contributed by His396.

This sequence belongs to the glycosyltransferase 2 family. Homotetramer. Mn(2+) serves as cofactor. Mg(2+) is required as a cofactor.

Its subcellular location is the cell membrane. The catalysed reaction is beta-D-galactofuranosyl-(1-&gt;5)-beta-D-galactofuranosyl-(1-&gt;4)-alpha-L-rhamnosyl-(1-&gt;3)-N-acetyl-alpha-D-glucosaminyl-diphospho-trans,octa-cis-decaprenol + 28 UDP-alpha-D-galactofuranose = [beta-D-galactofuranosyl-(1-&gt;5)-beta-D-galactofuranosyl-(1-&gt;6)]14-beta-D-galactofuranosyl-(1-&gt;5)-beta-D-galactofuranosyl-(1-&gt;4)-alpha-L-rhamnopyranosyl-(1-&gt;3)-N-acetyl-alpha-D-glucosaminyl-diphospho-trans,octa-cis-decaprenol + 28 UDP + 28 H(+). It functions in the pathway cell wall biogenesis; cell wall polysaccharide biosynthesis. In terms of biological role, involved in the galactan polymerization of the arabinogalactan (AG) region of the mycolylarabinogalactan-peptidoglycan (mAGP) complex, an essential component of the mycobacteria cell wall. Thus, successively transfers approximately 28 galactofuranosyl (Galf) residues from UDP-galactofuranose (UDP-Galf) onto the galactofuranosyl-galactofuranosyl-rhamnosyl-GlcNAc-diphospho-decaprenol (Galf-Galf-Rha-GlcNAc-PP-C50) acceptor produced by GlfT1, with alternating 1-&gt;5 and 1-&gt;6 links, forming a galactan domain with approximately 30 galactofuranosyl residues. The protein is Galactofuranosyltransferase GlfT2 of Mycobacterium tuberculosis (strain ATCC 25618 / H37Rv).